We begin with the raw amino-acid sequence, 257 residues long: Probable enoyl-CoA hydratase echA17 (257 aa).

Belongs to the enoyl-CoA hydratase/isomerase family.

It carries out the reaction a (3S)-3-hydroxyacyl-CoA = a (2E)-enoyl-CoA + H2O. The catalysed reaction is a 4-saturated-(3S)-3-hydroxyacyl-CoA = a (3E)-enoyl-CoA + H2O. Its function is as follows. Could possibly oxidize fatty acids using specific components. The chain is Probable enoyl-CoA hydratase echA17 (echA17) from Mycobacterium avium (strain 104).